A 98-amino-acid polypeptide reads, in one-letter code: MSLTYMNMFMAFTISLLGLLLYRSHMMSSLLCLEGMMLSLFVMMTMTILNTHLTLASMIPIILLVFAACEAALGLSLLVMVSTTYGMDYVQNLNLLQC.

Helical transmembrane passes span 1–21 (MSLTYMNMFMAFTISLLGLLL), 29–49 (SLLCLEGMMLSLFVMMTMTIL), and 61–81 (IILLVFAACEAALGLSLLVMV).

Belongs to the complex I subunit 4L family. In terms of assembly, core subunit of respiratory chain NADH dehydrogenase (Complex I) which is composed of 45 different subunits.

It localises to the mitochondrion inner membrane. The catalysed reaction is a ubiquinone + NADH + 5 H(+)(in) = a ubiquinol + NAD(+) + 4 H(+)(out). Its function is as follows. Core subunit of the mitochondrial membrane respiratory chain NADH dehydrogenase (Complex I) which catalyzes electron transfer from NADH through the respiratory chain, using ubiquinone as an electron acceptor. Part of the enzyme membrane arm which is embedded in the lipid bilayer and involved in proton translocation. The chain is NADH-ubiquinone oxidoreductase chain 4L (MT-ND4L) from Vampyrodes caraccioli (Great stripe-faced bat).